We begin with the raw amino-acid sequence, 236 residues long: Uridylate kinase (236 aa).

Residue 12–15 (KISG) coordinates ATP. The segment at 20–25 (GTNGYG) is involved in allosteric activation by GTP. A UMP-binding site is contributed by Gly54. Residues Gly55 and Arg59 each coordinate ATP. Residues Asp72 and 133–140 (TGNPYFST) contribute to the UMP site. ATP is bound by residues Tyr166 and Asp169.

Belongs to the UMP kinase family. Homohexamer.

It is found in the cytoplasm. The enzyme catalyses UMP + ATP = UDP + ADP. Its pathway is pyrimidine metabolism; CTP biosynthesis via de novo pathway; UDP from UMP (UMPK route): step 1/1. Its activity is regulated as follows. Allosterically activated by GTP. Inhibited by UTP. Its function is as follows. Catalyzes the reversible phosphorylation of UMP to UDP. The chain is Uridylate kinase from Clostridium acetobutylicum (strain ATCC 824 / DSM 792 / JCM 1419 / IAM 19013 / LMG 5710 / NBRC 13948 / NRRL B-527 / VKM B-1787 / 2291 / W).